The primary structure comprises 327 residues: Ferrochelatase (327 aa).

Residues His196 and Glu277 each coordinate Fe cation.

Belongs to the ferrochelatase family.

The protein localises to the cytoplasm. The catalysed reaction is heme b + 2 H(+) = protoporphyrin IX + Fe(2+). Its pathway is porphyrin-containing compound metabolism; protoheme biosynthesis; protoheme from protoporphyrin-IX: step 1/1. In terms of biological role, catalyzes the ferrous insertion into protoporphyrin IX. In Gloeobacter violaceus (strain ATCC 29082 / PCC 7421), this protein is Ferrochelatase.